We begin with the raw amino-acid sequence, 254 residues long: Imidazole glycerol phosphate synthase subunit HisF (254 aa).

Residues aspartate 13 and aspartate 132 contribute to the active site.

This sequence belongs to the HisA/HisF family. Heterodimer of HisH and HisF.

Its subcellular location is the cytoplasm. It catalyses the reaction 5-[(5-phospho-1-deoxy-D-ribulos-1-ylimino)methylamino]-1-(5-phospho-beta-D-ribosyl)imidazole-4-carboxamide + L-glutamine = D-erythro-1-(imidazol-4-yl)glycerol 3-phosphate + 5-amino-1-(5-phospho-beta-D-ribosyl)imidazole-4-carboxamide + L-glutamate + H(+). It participates in amino-acid biosynthesis; L-histidine biosynthesis; L-histidine from 5-phospho-alpha-D-ribose 1-diphosphate: step 5/9. In terms of biological role, IGPS catalyzes the conversion of PRFAR and glutamine to IGP, AICAR and glutamate. The HisF subunit catalyzes the cyclization activity that produces IGP and AICAR from PRFAR using the ammonia provided by the HisH subunit. This is Imidazole glycerol phosphate synthase subunit HisF from Wolinella succinogenes (strain ATCC 29543 / DSM 1740 / CCUG 13145 / JCM 31913 / LMG 7466 / NCTC 11488 / FDC 602W) (Vibrio succinogenes).